The sequence spans 103 residues: MVNVKVEFLGGLDAIFKKQRVHKLTLKKNNSDDEPVTVGDLIDYIVENMIEDKNDVEVFLQNGTVRAGILTLINDTDWELEGEKEYELEDGDIISFTSTLHGG.

Gly-103 bears the 1-thioglycine mark. Residue Gly-103 forms a Glycyl lysine isopeptide (Gly-Lys) (interchain with K-? in acceptor proteins) linkage.

The protein belongs to the URM1 family. Post-translationally, C-terminal thiocarboxylation occurs in 2 steps, it is first acyl-adenylated (-COAMP) via the hesA/moeB/thiF part of UBA4, then thiocarboxylated (-COSH) via the rhodanese domain of UBA4.

It localises to the cytoplasm. It participates in tRNA modification; 5-methoxycarbonylmethyl-2-thiouridine-tRNA biosynthesis. Acts as a sulfur carrier required for 2-thiolation of mcm(5)S(2)U at tRNA wobble positions of cytosolic tRNA(Lys), tRNA(Glu) and tRNA(Gln). Serves as sulfur donor in tRNA 2-thiolation reaction by being thiocarboxylated (-COSH) at its C-terminus by the MOCS3 homolog UBA4. The sulfur is then transferred to tRNA to form 2-thiolation of mcm(5)S(2)U. Prior mcm(5) tRNA modification by the elongator complex is required for 2-thiolation. Also acts as a ubiquitin-like protein (UBL) that is covalently conjugated via an isopeptide bond to lysine residues of target proteins such as AHP1. The thiocarboxylated form serves as substrate for conjugation and oxidative stress specifically induces the formation of UBL-protein conjugates. This is Ubiquitin-related modifier 1 from Vanderwaltozyma polyspora (strain ATCC 22028 / DSM 70294 / BCRC 21397 / CBS 2163 / NBRC 10782 / NRRL Y-8283 / UCD 57-17) (Kluyveromyces polysporus).